Consider the following 980-residue polypeptide: Peroxisomal ATPase PEX6 (980 aa).

R119 carries the omega-N-methylarginine modification. ATP-binding positions include 470 to 477 and 744 to 751; these read GPPGCGKT and GPPGTGKT.

Belongs to the AAA ATPase family. Interacts with PEX1; forming the PEX1-PEX6 AAA ATPase complex, which is composed of a heterohexamer formed by a trimer of PEX1-PEX6 dimers. Interacts with PEX26; interaction is direct and promotes recruitment to peroxisomal membranes. Interacts with ZFAND6. As to expression, expressed in the retina, at higher levels in the photoreceptor layer at the joint between the outer and inner segments.

The protein resides in the cytoplasm. Its subcellular location is the cytosol. It localises to the peroxisome membrane. It is found in the cell projection. The protein localises to the cilium. The protein resides in the photoreceptor outer segment. The catalysed reaction is ATP + H2O = ADP + phosphate + H(+). In terms of biological role, component of the PEX1-PEX6 AAA ATPase complex, a protein dislocase complex that mediates the ATP-dependent extraction of the PEX5 receptor from peroxisomal membranes, an essential step for PEX5 recycling. Specifically recognizes PEX5 monoubiquitinated at 'Cys-11', and pulls it out of the peroxisome lumen through the PEX2-PEX10-PEX12 retrotranslocation channel. Extraction by the PEX1-PEX6 AAA ATPase complex is accompanied by unfolding of the TPR repeats and release of bound cargo from PEX5. This chain is Peroxisomal ATPase PEX6, found in Homo sapiens (Human).